Here is a 207-residue protein sequence, read N- to C-terminus: Zinc finger protein 487 (207 aa).

The 43-residue stretch at 1 to 43 folds into the KRAB domain; the sequence is MLENYSLLLSVGYCITKPEVVCKLEHGQVLWILEEESPSQSHL. Residues 177-202 form a C2H2-type; atypical zinc finger; that stretch reads KQCFEYNQCGKAFHEEAACSTHKRVC.

The protein belongs to the krueppel C2H2-type zinc-finger protein family.

It is found in the nucleus. In terms of biological role, may be involved in transcriptional regulation. The sequence is that of Zinc finger protein 487 (ZNF487) from Homo sapiens (Human).